Consider the following 198-residue polypeptide: FMN-dependent NADH:quinone oxidoreductase (198 aa).

FMN contacts are provided by residues 92 to 95 (MWNL) and 136 to 139 (SRGG).

It belongs to the azoreductase type 1 family. As to quaternary structure, homodimer. It depends on FMN as a cofactor.

The enzyme catalyses 2 a quinone + NADH + H(+) = 2 a 1,4-benzosemiquinone + NAD(+). The catalysed reaction is N,N-dimethyl-1,4-phenylenediamine + anthranilate + 2 NAD(+) = 2-(4-dimethylaminophenyl)diazenylbenzoate + 2 NADH + 2 H(+). Quinone reductase that provides resistance to thiol-specific stress caused by electrophilic quinones. In terms of biological role, also exhibits azoreductase activity. Catalyzes the reductive cleavage of the azo bond in aromatic azo compounds to the corresponding amines. This chain is FMN-dependent NADH:quinone oxidoreductase, found in Clostridium perfringens (strain ATCC 13124 / DSM 756 / JCM 1290 / NCIMB 6125 / NCTC 8237 / Type A).